A 301-amino-acid chain; its full sequence is GTPase Era (301 aa).

The Era-type G domain maps to 6 to 173 (KSGFVAIVGR…LEQTNANLEI (168 aa)). The segment at 14-21 (GRPNVGKS) is G1. Position 14-21 (14-21 (GRPNVGKS)) interacts with GTP. The tract at residues 40–44 (QTTRN) is G2. Residues 61–64 (DTPG) are G3. Residues 61 to 65 (DTPGI) and 123 to 126 (NKID) contribute to the GTP site. The tract at residues 123–126 (NKID) is G4. A G5 region spans residues 152 to 154 (ISA). A KH type-2 domain is found at 204–282 (TREEVPHSVA…FLEVWVKVQK (79 aa)).

Belongs to the TRAFAC class TrmE-Era-EngA-EngB-Septin-like GTPase superfamily. Era GTPase family. In terms of assembly, monomer.

Its subcellular location is the cytoplasm. The protein resides in the cell membrane. In terms of biological role, an essential GTPase that binds both GDP and GTP, with rapid nucleotide exchange. Plays a role in 16S rRNA processing and 30S ribosomal subunit biogenesis and possibly also in cell cycle regulation and energy metabolism. The protein is GTPase Era of Listeria monocytogenes serotype 4a (strain HCC23).